Consider the following 305-residue polypeptide: 4-diphosphocytidyl-2-C-methyl-D-erythritol kinase (305 aa).

The active site involves K18. 103–113 (PYGAGLGGGSS) lines the ATP pocket. D145 is an active-site residue.

This sequence belongs to the GHMP kinase family. IspE subfamily.

The enzyme catalyses 4-CDP-2-C-methyl-D-erythritol + ATP = 4-CDP-2-C-methyl-D-erythritol 2-phosphate + ADP + H(+). It participates in isoprenoid biosynthesis; isopentenyl diphosphate biosynthesis via DXP pathway; isopentenyl diphosphate from 1-deoxy-D-xylulose 5-phosphate: step 3/6. Its function is as follows. Catalyzes the phosphorylation of the position 2 hydroxy group of 4-diphosphocytidyl-2C-methyl-D-erythritol. This is 4-diphosphocytidyl-2-C-methyl-D-erythritol kinase from Lawsonia intracellularis (strain PHE/MN1-00).